A 134-amino-acid chain; its full sequence is Small ribosomal subunit protein uS8c (134 aa).

The protein belongs to the universal ribosomal protein uS8 family. As to quaternary structure, part of the 30S ribosomal subunit.

It is found in the plastid. It localises to the chloroplast. Its function is as follows. One of the primary rRNA binding proteins, it binds directly to 16S rRNA central domain where it helps coordinate assembly of the platform of the 30S subunit. The sequence is that of Small ribosomal subunit protein uS8c (rps8) from Nicotiana tabacum (Common tobacco).